Reading from the N-terminus, the 417-residue chain is Cobalamin binding intrinsic factor (417 aa).

An N-terminal signal peptide occupies residues 1–22; that stretch reads MAWFSLHLLHLLWAAAGTSTWA. 3 disulfide bridges follow: C26/C246, C103/C288, and C143/C182. N100 carries N-linked (GlcNAc...) asparagine glycosylation. A cob(II)alamin-binding site is contributed by D171. S191 carries the phosphoserine modification. N209 carries an N-linked (GlcNAc...) asparagine glycan. Cob(II)alamin-binding residues include D222 and Q270. N311 and N330 each carry an N-linked (GlcNAc...) asparagine glycan. Residues 365–370 and 386–395 contribute to the cob(II)alamin site; these read SWGLVV and WQFLSGKTPL. N413 is a glycosylation site (N-linked (GlcNAc...) asparagine).

Belongs to the eukaryotic cobalamin transport proteins family. As to quaternary structure, interacts with CUBN (via CUB domains).

It is found in the secreted. In terms of biological role, promotes absorption of the essential vitamin cobalamin (Cbl) in the ileum. After interaction with CUBN, the CBLIF-cobalamin complex is internalized via receptor-mediated endocytosis. This is Cobalamin binding intrinsic factor (CBLIF) from Canis lupus familiaris (Dog).